The following is a 487-amino-acid chain: MVKQQDWSVTTCVLLFLFLASQIHCRSGIHVSKRLEGSKQGDGKSGDTSFNVLRRVLSPKEKDLIKKLPGQPSGVSFRQYGGYVPVNEPSSRFLYYYFVEAIKPNTSTPLVIWFNGGPACSSLGGAFLELGPFRVHSGGRKLFRNPYSWNNEANVLFLESPVTTGFSYSSNPIDLEELGEKGDKATAEDNYIFLMNWLERFPEYKGRDIYIAGQSYAGHYVPQLAQIIIHRNKKTLVNLRGILIGNPSLLTSIQDPYGYEFMLSHGLMSQQQMDNYNQFCLRDDLYDNDKCALSVKTIDDAKKHLDTYNIYAPVCLNSTLSRISKKCTTVLEVDPCSKDYLKAYLNRKKVQKAIHANTTKLPYEWTSCNNELTENWSENDRDTPMIPILHELMGEGVRVMIYNGDVDLEIPFASTLAVVKEMNLTVVKEFRPWFTGGQLGGFTEDYKGNLTFVTVKGAGHSVPTDQPIHALNIFTSFIRNTPLPHTA.

A signal peptide spans 1 to 28; it reads MVKQQDWSVTTCVLLFLFLASQIHCRSG. An N-linked (GlcNAc...) asparagine glycan is attached at Asn105. Disulfide bonds link Cys120-Cys368, Cys280-Cys291, and Cys315-Cys336. Ser215 is an active-site residue. Asn317, Asn357, and Asn375 each carry an N-linked (GlcNAc...) asparagine glycan. The active site involves Asp407. N-linked (GlcNAc...) asparagine glycans are attached at residues Asn423 and Asn449. The active site involves His460.

It belongs to the peptidase S10 family. As to expression, expressed in seedlings, roots, leaves, stems, flowers and siliques.

It is found in the secreted. Functionally, probable carboxypeptidase. This is Serine carboxypeptidase-like 37 (SCPL37) from Arabidopsis thaliana (Mouse-ear cress).